We begin with the raw amino-acid sequence, 349 residues long: Protein DMR6-LIKE OXYGENASE 1 (349 aa).

Positions 197-296 constitute a Fe2OG dioxygenase domain; that stretch reads HAQHMAFNYY…RLSIPTFYFP (100 aa). Tyr206 is a binding site for 2-oxoglutarate. Residues His221, Asp223, and His277 each coordinate Fe cation. Arg287 and Ser289 together coordinate 2-oxoglutarate.

This sequence belongs to the iron/ascorbate-dependent oxidoreductase family. Requires L-ascorbate as cofactor. It depends on Fe(2+) as a cofactor.

It carries out the reaction salicylate + NADH + O2 + H(+) = 2,3-dihydroxybenzoate + NAD(+) + H2O. Functionally, converts salicylic acid (SA) to both 2,3-dihydroxybenzoic acid (2,3-DHBA) and 2,5-DHBA in vitro but only 2,3-DHBA in vivo. Component of a negative feedback regulation system of SA levels during senescence. Regulates both onset and progression of leaf senescence. Negative regulator of defense against Hyaloperonospora arabidopsidis. In terms of biological role, (Microbial infection) Confers susceptibility to the downy mildew pathogen Hyaloperonospora arabidopsidis. The sequence is that of Protein DMR6-LIKE OXYGENASE 1 from Arabidopsis thaliana (Mouse-ear cress).